The chain runs to 347 residues: Molybdenum cofactor biosynthesis bifunctional protein (347 aa).

The tract at residues 1–158 (MFTHLDENQQ…EKTGGKADVS (158 aa)) is molybdenum cofactor biosynthesis protein C. Substrate contacts are provided by residues 75 to 77 (FCH) and 116 to 117 (ME). Aspartate 131 acts as the For MoaC activity in catalysis. Residues 159 to 347 (QTPLYGLVLT…NSPEDYGQIN (189 aa)) form a molybdenum cofactor guanylyltransferase region. GTP contacts are provided by residues 167–169 (LTG), lysine 179, aspartate 226, and aspartate 255. Aspartate 255 lines the Mg(2+) pocket.

In the N-terminal section; belongs to the MoaC family. This sequence in the C-terminal section; belongs to the MobA family. The cofactor is Mg(2+).

It is found in the cytoplasm. The enzyme catalyses Mo-molybdopterin + GTP + H(+) = Mo-molybdopterin guanine dinucleotide + diphosphate. It carries out the reaction (8S)-3',8-cyclo-7,8-dihydroguanosine 5'-triphosphate = cyclic pyranopterin phosphate + diphosphate. It participates in cofactor biosynthesis; molybdopterin biosynthesis. Catalyzes the conversion of (8S)-3',8-cyclo-7,8-dihydroguanosine 5'-triphosphate to cyclic pyranopterin monophosphate (cPMP). Functionally, transfers a GMP moiety from GTP to Mo-molybdopterin (Mo-MPT) cofactor (Moco or molybdenum cofactor) to form Mo-molybdopterin guanine dinucleotide (Mo-MGD) cofactor. The chain is Molybdenum cofactor biosynthesis bifunctional protein (moaC/mobA) from Synechocystis sp. (strain ATCC 27184 / PCC 6803 / Kazusa).